Consider the following 503-residue polypeptide: Transcription termination/antitermination protein NusA (503 aa).

The S1 motif domain maps to 139-203; it reads GEIINGIVKR…KGPQIFLSRV (65 aa). Residues 308 to 378 form the KH domain; it reads RHKVEVVVSQ…LDVEEVIGQL (71 aa).

Belongs to the NusA family. Monomer. Binds directly to the core enzyme of the DNA-dependent RNA polymerase and to nascent RNA.

It localises to the cytoplasm. Functionally, participates in both transcription termination and antitermination. The polypeptide is Transcription termination/antitermination protein NusA (Rickettsia conorii (strain ATCC VR-613 / Malish 7)).